We begin with the raw amino-acid sequence, 83 residues long: Cell division topological specificity factor (83 aa).

Belongs to the MinE family.

Functionally, prevents the cell division inhibition by proteins MinC and MinD at internal division sites while permitting inhibition at polar sites. This ensures cell division at the proper site by restricting the formation of a division septum at the midpoint of the long axis of the cell. The sequence is that of Cell division topological specificity factor from Deinococcus deserti (strain DSM 17065 / CIP 109153 / LMG 22923 / VCD115).